We begin with the raw amino-acid sequence, 398 residues long: Stearoyl-[acyl-carrier-protein] 9-desaturase, chloroplastic (398 aa).

Residues 1 to 34 constitute a chloroplast transit peptide; it reads MALKLHHTAFNPSMAVTSSGLPRSYHLRSHRVFM. Residues 46–66 are disordered; the sequence is IPNAKKPHMPPREAHVQKTHS. Positions 140, 178, 181, 231, 264, and 267 each coordinate Fe cation.

The protein belongs to the fatty acid desaturase type 2 family. Homodimer. Fe(2+) is required as a cofactor.

It is found in the plastid. Its subcellular location is the chloroplast. The enzyme catalyses octadecanoyl-[ACP] + 2 reduced [2Fe-2S]-[ferredoxin] + O2 + 2 H(+) = (9Z)-octadecenoyl-[ACP] + 2 oxidized [2Fe-2S]-[ferredoxin] + 2 H2O. Its pathway is lipid metabolism; fatty acid metabolism. Functionally, converts stearoyl-ACP to oleoyl-ACP by introduction of a cis double bond between carbons 9 and 10 of the acyl chain. The chain is Stearoyl-[acyl-carrier-protein] 9-desaturase, chloroplastic from Simmondsia chinensis (Jojoba).